A 241-amino-acid chain; its full sequence is Neuromodulin (241 aa).

The span at 1 to 26 (TKQVEKNEDGDQKIEQDGIKPEDKAH) shows a compositional bias: basic and acidic residues. A disordered region spans residues 1-241 (TKQVEKNEDG…EESKADQENA (241 aa)). The IQ domain maps to 25–54 (AHKAATKIQASFRGHITRKKLKGEKKGDAP). 2 stretches are compositionally biased toward low complexity: residues 80–95 (APAATEAAAADSAQQE) and 118–131 (SEQPAPQAATPAAS). Composition is skewed to basic and acidic residues over residues 132–147 (SEEKTAAAAAPEREST) and 159–171 (KADEAQDKEEPKQ). The span at 172-198 (ADVPAADTTATTTPAAEDATAKATAQP) shows a compositional bias: low complexity. Basic and acidic residues-rich tracts occupy residues 208–220 (TEEKTDAVEETKP) and 232–241 (EESKADQENA).

It belongs to the neuromodulin family. As to quaternary structure, binds calmodulin with a greater affinity in the absence of Ca(2+) than in its presence. Post-translationally, palmitoylated. Palmitoylation is essential for plasma membrane association.

Its subcellular location is the cell membrane. It is found in the cell projection. The protein resides in the growth cone membrane. It localises to the synapse. The protein localises to the filopodium membrane. In terms of biological role, this protein is associated with nerve growth. It is a major component of the motile 'growth cones' that form the tips of elongating axons. Plays a role in axonal and dendritic filopodia induction. This is Neuromodulin (GAP43) from Serinus canaria (Island canary).